The primary structure comprises 396 residues: Ribosomal RNA large subunit methyltransferase I (396 aa).

The PUA domain maps to 2 to 81 (TVSIYLAKGR…EAIDKDFFVR (80 aa)).

The protein belongs to the methyltransferase superfamily. RlmI family.

It is found in the cytoplasm. It catalyses the reaction cytidine(1962) in 23S rRNA + S-adenosyl-L-methionine = 5-methylcytidine(1962) in 23S rRNA + S-adenosyl-L-homocysteine + H(+). In terms of biological role, specifically methylates the cytosine at position 1962 (m5C1962) of 23S rRNA. The sequence is that of Ribosomal RNA large subunit methyltransferase I from Aliivibrio fischeri (strain MJ11) (Vibrio fischeri).